Consider the following 345-residue polypeptide: NADH-ubiquinone oxidoreductase chain 2 (345 aa).

10 helical membrane passes run 1–21 (MNPITLAIIYFTIFLGPVITM), 25–45 (NLMLMWVGLEFSLLAIIPMLI), 56–76 (ATKYFVTQATASMIILLAIVL), 92–114 (GLILNMTLMALSMKLGLAPFHFW), 149–171 (LNSTIILMLAITSIFMGAWGGLN), 178–198 (IMAYSSIAHMGWMLAILPYNP), 200–220 (LTLLNLMIYIILTAPMFMALM), 241–261 (LTMISLMLLSLGGLPPLTGFL), 274–294 (NCLIMATLMAMMALLNLFFYT), and 324–344 (LMFSTLAIMSTMTLPLAPQLI).

The protein belongs to the complex I subunit 2 family. In terms of assembly, core subunit of respiratory chain NADH dehydrogenase (Complex I) which is composed of 45 different subunits. Interacts with TMEM242.

The protein resides in the mitochondrion inner membrane. It catalyses the reaction a ubiquinone + NADH + 5 H(+)(in) = a ubiquinol + NAD(+) + 4 H(+)(out). Core subunit of the mitochondrial membrane respiratory chain NADH dehydrogenase (Complex I) which catalyzes electron transfer from NADH through the respiratory chain, using ubiquinone as an electron acceptor. Essential for the catalytic activity and assembly of complex I. In Mus musculus (Mouse), this protein is NADH-ubiquinone oxidoreductase chain 2.